Here is a 401-residue protein sequence, read N- to C-terminus: Multidrug resistance protein MdtH (401 aa).

The next 11 membrane-spanning stretches (helical) occupy residues 13 to 33, 34 to 54, 99 to 116, 139 to 159, 165 to 185, 214 to 234, 243 to 263, 277 to 297, 299 to 319, 340 to 360, and 368 to 388; these read YFLLFDNLLVVLGFFVVFPLI, SIRFVDQLGWAALVVGLALGL, PWILWLACALSGLGGTLF, LLMMQDSAGAVIGALIGSWLL, FVCWTGAAIFVLAAGWNAWLL, VLTLTGYYMLAVQVMLMLPIV, AAVKWMYAIEAALSLTLLYPL, LMAGLLIMTLSLFPIGMITHL, TLFMFICFFYMGSILAEPARE, LGLALGGALGYTGGGWMYDTG, and LPWFLLGIIGLITLAGLYWQF.

It belongs to the major facilitator superfamily. DHA1 family. MdtH (TC 2.A.1.2.21) subfamily.

Its subcellular location is the cell inner membrane. The chain is Multidrug resistance protein MdtH from Yersinia pseudotuberculosis serotype O:1b (strain IP 31758).